The following is a 547-amino-acid chain: MRSDEVKKGIDRVAHRALLKALGVTDDEMDKPFIGVANAYNTIVPGHMTLDKLTQAVKEGVYAAGGVPFEFGIIGICDGIAMGHEGMCFSLPSRELVADTIEAMVEAHRFDGLVVVASCDKIIPGMLMAMLRLNIPAIAVTGGPMPYERVGGEKVSIKDAFEAAGMYKAGKLDDAGLKLYEDYCAPYCGSCQGLYTANSMQILTETLGLSLPYCSTSPCPSSRKLRIAKQSGKRVVELVMQNIKPLDFVNERSFENAITMDMLVGGSTNTVLHLPAIAKEAGIRLSLDLFDEISRRTPHIVSIDPASKEMVVDLDESGGVPMLIKKARKYFHDEMTVSGKTLYEIAEMAVLRGRDIIASPDNPLHKEGGIAILKGNLAENGAVIKAAAVSEDMMRFEGTAKVYDSEKEALNAILDGKVEEGDVVVIRYMGPKGAPGMPEMLLPTAAISGLGLQKVALITDGRFSGATRGPCIGHVSPEAAVGGNIALVEDGDKISIDIPARKLEVKLSDEELAERRAKWKPKEKELKGYLAKYAKLVRGAEEGAALL.

Aspartate 78 serves as a coordination point for Mg(2+). Cysteine 119 serves as a coordination point for [2Fe-2S] cluster. Positions 120 and 121 each coordinate Mg(2+). Position 121 is an N6-carboxylysine (lysine 121). A [2Fe-2S] cluster-binding site is contributed by cysteine 191. Position 439 (glutamate 439) interacts with Mg(2+). Serine 464 (proton acceptor) is an active-site residue.

The protein belongs to the IlvD/Edd family. In terms of assembly, homodimer. [2Fe-2S] cluster is required as a cofactor. The cofactor is Mg(2+).

It carries out the reaction (2R)-2,3-dihydroxy-3-methylbutanoate = 3-methyl-2-oxobutanoate + H2O. The catalysed reaction is (2R,3R)-2,3-dihydroxy-3-methylpentanoate = (S)-3-methyl-2-oxopentanoate + H2O. It functions in the pathway amino-acid biosynthesis; L-isoleucine biosynthesis; L-isoleucine from 2-oxobutanoate: step 3/4. It participates in amino-acid biosynthesis; L-valine biosynthesis; L-valine from pyruvate: step 3/4. In terms of biological role, functions in the biosynthesis of branched-chain amino acids. Catalyzes the dehydration of (2R,3R)-2,3-dihydroxy-3-methylpentanoate (2,3-dihydroxy-3-methylvalerate) into 2-oxo-3-methylpentanoate (2-oxo-3-methylvalerate) and of (2R)-2,3-dihydroxy-3-methylbutanoate (2,3-dihydroxyisovalerate) into 2-oxo-3-methylbutanoate (2-oxoisovalerate), the penultimate precursor to L-isoleucine and L-valine, respectively. This is Dihydroxy-acid dehydratase from Archaeoglobus fulgidus (strain ATCC 49558 / DSM 4304 / JCM 9628 / NBRC 100126 / VC-16).